The sequence spans 414 residues: Enterobactin exporter EntS (414 aa).

Residues 1–21 (MNRQSWLLNLSLLKTHPAFRA) are Cytoplasmic-facing. A helical membrane pass occupies residues 22 to 42 (VFLARFISIVSLGLLGVAVPV). The Periplasmic portion of the chain corresponds to 43–55 (QIQMMTHSTWQVG). A helical membrane pass occupies residues 56–76 (LSVTLTGGAMFIGLMVGGVLA). Topologically, residues 77-83 (DRYERKK) are cytoplasmic. Residues 84 to 104 (VILLARGTCGIGFIGLCVNAL) form a helical membrane-spanning segment. The Periplasmic portion of the chain corresponds to 105-109 (LPEPS). A helical transmembrane segment spans residues 110-130 (LLAIYLLGLWDGFFASLGVTA). The Cytoplasmic portion of the chain corresponds to 131–156 (LLAATPALVGRENLMQAGAITMLTVR). The chain crosses the membrane as a helical span at residues 157–177 (LGSVISPMLGGILLASGGVAW). Residue asparagine 178 is a topological domain, periplasmic. A helical membrane pass occupies residues 179–199 (YGLAAAGTFITLLPLLTLPRL). The Cytoplasmic portion of the chain corresponds to 200-218 (PVPPQPRENPFLALLAAFR). Residues 219-239 (FLLACPLIGGIALLGGLVTMA) traverse the membrane as a helical segment. Residues 240–256 (SAVRVLYPALAMSWQMS) lie on the Periplasmic side of the membrane. Residues 257–277 (AAQIGLLYAAIPLGAAIGALT) form a helical membrane-spanning segment. The Cytoplasmic segment spans residues 278 to 287 (SGQLAHSVRP). A helical transmembrane segment spans residues 288–307 (GLIMLVSTVGSFLAVGLFAI). The Periplasmic portion of the chain corresponds to 308–313 (MPVWIA). The chain crosses the membrane as a helical span at residues 314-336 (GVICLALFGWLSAISSLLQYTLL). Over 337–356 (QTQTPENMLGRMNGLWTAQN) the chain is Cytoplasmic. The helical transmembrane segment at 357–377 (VTGDAIGAALLGGLGAMMTPV) threads the bilayer. Residue alanine 378 is a topological domain, periplasmic. A helical transmembrane segment spans residues 379–399 (SASVSGFGLVIIGLLLLLVLG). Topologically, residues 400–414 (ELRRFRQTSPVSDAG) are cytoplasmic.

It belongs to the major facilitator superfamily. EntS (TC 2.A.1.38) family.

The protein localises to the cell inner membrane. In terms of biological role, component of an export pathway for enterobactin. In Salmonella paratyphi A (strain ATCC 9150 / SARB42), this protein is Enterobactin exporter EntS.